The chain runs to 261 residues: Succinate dehydrogenase iron-sulfur subunit (261 aa).

The disordered stretch occupies residues 1 to 23; sequence MAELRLPPNSVVKKGKEHKEQEE. The 2Fe-2S ferredoxin-type domain occupies 28 to 119; sequence RKVKIYRYDP…DIKIYPLPHM (92 aa). [2Fe-2S] cluster-binding residues include C80, C85, and C100. A 4Fe-4S ferredoxin-type domain is found at 161-191; that stretch reads GREKLDGLYECILCACCSTSCPSYWWNGDKY. 3 residues coordinate [4Fe-4S] cluster: C171, C174, and C177. C181 provides a ligand contact to [3Fe-4S] cluster. Residue W186 participates in a ubiquinone binding. Positions 228 and 234 each coordinate [3Fe-4S] cluster. C238 contacts [4Fe-4S] cluster.

It belongs to the succinate dehydrogenase/fumarate reductase iron-sulfur protein family. As to quaternary structure, part of an enzyme complex containing four subunits: a flavoprotein, an iron-sulfur, cytochrome b-556, and a hydrophobic anchor protein. Requires [2Fe-2S] cluster as cofactor. [3Fe-4S] cluster is required as a cofactor. It depends on [4Fe-4S] cluster as a cofactor.

The catalysed reaction is a quinone + succinate = fumarate + a quinol. Its pathway is carbohydrate metabolism; tricarboxylic acid cycle; fumarate from succinate (bacterial route): step 1/1. The chain is Succinate dehydrogenase iron-sulfur subunit (sdhB) from Rickettsia felis (strain ATCC VR-1525 / URRWXCal2) (Rickettsia azadi).